Here is a 686-residue protein sequence, read N- to C-terminus: Rhophilin-2 (686 aa).

Residues 26–100 (NPLAQTGRSK…LEGLNISVGV (75 aa)) enclose the REM-1 domain. Residues 46–66 (QILKAVRMRTGAENLLKVATN) are interaction with Rho. One can recognise a BRO1 domain in the interval 111-502 (PLIPLGLKET…TDFFQKLGPL (392 aa)). The 79-residue stretch at 515 to 593 (RGIHFTVEEG…EEVEMKVVSL (79 aa)) folds into the PDZ domain. Threonine 655 bears the Phosphothreonine mark.

The protein belongs to the RHPN family. As to quaternary structure, interacts with GTP-bound RhoA and RhoB. Interacts with both GTP- and GDP-bound RhoA. Interacts with KRT18.

Its subcellular location is the cytoplasm. It localises to the perinuclear region. Binds specifically to GTP-Rho. May function in a Rho pathway to limit stress fiber formation and/or increase the turnover of F-actin structures in the absence of high levels of RhoA activity. This is Rhophilin-2 (Rhpn2) from Mus musculus (Mouse).